The sequence spans 203 residues: dITP/XTP pyrophosphatase (203 aa).

8–13 (TANKGK) provides a ligand contact to substrate. 2 residues coordinate Mg(2+): Glu-41 and Asp-70. Asp-70 functions as the Proton acceptor in the catalytic mechanism. Substrate contacts are provided by residues Ser-71, 153–156 (FGYD), Lys-176, and 181–182 (HR).

The protein belongs to the HAM1 NTPase family. As to quaternary structure, homodimer. Mg(2+) serves as cofactor.

It catalyses the reaction XTP + H2O = XMP + diphosphate + H(+). The catalysed reaction is dITP + H2O = dIMP + diphosphate + H(+). The enzyme catalyses ITP + H2O = IMP + diphosphate + H(+). Its function is as follows. Pyrophosphatase that catalyzes the hydrolysis of nucleoside triphosphates to their monophosphate derivatives, with a high preference for the non-canonical purine nucleotides XTP (xanthosine triphosphate), dITP (deoxyinosine triphosphate) and ITP. Seems to function as a house-cleaning enzyme that removes non-canonical purine nucleotides from the nucleotide pool, thus preventing their incorporation into DNA/RNA and avoiding chromosomal lesions. The chain is dITP/XTP pyrophosphatase from Listeria monocytogenes serovar 1/2a (strain ATCC BAA-679 / EGD-e).